A 96-amino-acid polypeptide reads, in one-letter code: NADH-ubiquinone oxidoreductase chain 6 (96 aa).

Helical transmembrane passes span 24-44 (MSLL…LGSI) and 48-68 (WFAY…FIYV).

Belongs to the complex I subunit 6 family.

Its subcellular location is the mitochondrion membrane. The catalysed reaction is a ubiquinone + NADH + 5 H(+)(in) = a ubiquinol + NAD(+) + 4 H(+)(out). Core subunit of the mitochondrial membrane respiratory chain NADH dehydrogenase (Complex I) that is believed to belong to the minimal assembly required for catalysis. Complex I functions in the transfer of electrons from NADH to the respiratory chain. The immediate electron acceptor for the enzyme is believed to be ubiquinone. This is NADH-ubiquinone oxidoreductase chain 6 (ND6) from Albinaria turrita (Door snail).